The primary structure comprises 511 residues: Steroid 17-alpha-hydroxylase/17,20 lyase (511 aa).

A heme-binding site is contributed by Cys-442.

It belongs to the cytochrome P450 family. Requires heme as cofactor.

The protein resides in the endoplasmic reticulum membrane. The protein localises to the microsome membrane. The enzyme catalyses a C21-steroid + reduced [NADPH--hemoprotein reductase] + O2 = a 17alpha-hydroxy-C21-steroid + oxidized [NADPH--hemoprotein reductase] + H2O + H(+). It catalyses the reaction progesterone + reduced [NADPH--hemoprotein reductase] + O2 = 17alpha-hydroxyprogesterone + oxidized [NADPH--hemoprotein reductase] + H2O + H(+). The catalysed reaction is pregnenolone + reduced [NADPH--hemoprotein reductase] + O2 = 17alpha-hydroxypregnenolone + oxidized [NADPH--hemoprotein reductase] + H2O + H(+). It carries out the reaction 17alpha-hydroxyprogesterone + reduced [NADPH--hemoprotein reductase] + O2 = androst-4-ene-3,17-dione + acetate + oxidized [NADPH--hemoprotein reductase] + H2O + 2 H(+). The enzyme catalyses 17alpha-hydroxyprogesterone + reduced [NADPH--hemoprotein reductase] + O2 = 16alpha,17alpha-dihydroxyprogesterone + oxidized [NADPH--hemoprotein reductase] + H2O + H(+). It catalyses the reaction 16alpha,17alpha-dihydroxyprogesterone + reduced [NADPH--hemoprotein reductase] + O2 = 6beta,16alpha,17alpha-trihydroxyprogesterone + oxidized [NADPH--hemoprotein reductase] + H2O + H(+). The catalysed reaction is 17alpha-hydroxypregnenolone + reduced [NADPH--hemoprotein reductase] + O2 = 3beta-hydroxyandrost-5-en-17-one + acetate + oxidized [NADPH--hemoprotein reductase] + H2O + 2 H(+). It carries out the reaction 16alpha,17alpha-dihydroxypregnenolone + reduced [NADPH--hemoprotein reductase] + O2 = 3beta,16alpha-dihydroxy-androst-5-en-17-one + acetate + oxidized [NADPH--hemoprotein reductase] + H2O + 2 H(+). The enzyme catalyses 3beta-hydroxyandrost-5-en-17-one + reduced [NADPH--hemoprotein reductase] + O2 = 3beta,16alpha-dihydroxy-androst-5-en-17-one + oxidized [NADPH--hemoprotein reductase] + H2O + H(+). It catalyses the reaction androst-4-ene-3,17-dione + reduced [NADPH--hemoprotein reductase] + O2 = 16alpha-hydroxyandrost-4-ene-3,17-dione + oxidized [NADPH--hemoprotein reductase] + H2O + H(+). Its pathway is steroid hormone biosynthesis. The protein operates within steroid biosynthesis; glucocorticoid biosynthesis. Regulated predominantly by intracellular cAMP levels. The 17,20-lyase activity is stimulated by cytochrome b5, which acts as an allosteric effector increasing the Vmax of the lyase activity. A cytochrome P450 monooxygenase involved in corticoid and androgen biosynthesis. Catalyzes 17-alpha hydroxylation of C21 steroids, which is common for both pathways. A second oxidative step, required only for androgen synthesis, involves an acyl-carbon cleavage. The 17-alpha hydroxy intermediates, as part of adrenal glucocorticoids biosynthesis pathway, are precursors of cortisol. Hydroxylates steroid hormones, pregnenolone and progesterone to form 17-alpha hydroxy metabolites, followed by the cleavage of the C17-C20 bond to form C19 steroids, dehydroepiandrosterone (DHEA) and androstenedione. Has 16-alpha hydroxylase activity. Catalyzes 16-alpha hydroxylation of 17-alpha hydroxy pregnenolone, followed by the cleavage of the C17-C20 bond to form 16-alpha-hydroxy DHEA. Also 16-alpha hydroxylates androgens, relevant for estriol synthesis. Mechanistically, uses molecular oxygen inserting one oxygen atom into a substrate, and reducing the second into a water molecule, with two electrons provided by NADPH via cytochrome P450 reductase (CPR; NADPH-ferrihemoprotein reductase). The sequence is that of Steroid 17-alpha-hydroxylase/17,20 lyase (CYP17A1) from Mesocricetus auratus (Golden hamster).